The chain runs to 500 residues: MYFLSLPSLVIVIPVGYLLFHLGYNLFFHPLRGYPGPLLWRASSLPWKIALLRGTMHHDLMRFHQKYGDTVRIKPDEISYANAQAWRDIHAHVPGRPEFLKDPVRLPLAPNGVMSILVSDTKNHARFRSLFGHAFSDKGLRTQESTIVQYADLLVEVLREVADTGRSAEMVYYFNMAIFDSIGALSFGESFDSLKSRQLHPWVDAIHKNLKSVAISHVLRSMGIEFLTPYVLPKELRGKRQENYSYAVEKLNKRMKMEGDQGDFWDKVLVKSADDNQRGDGMSAGEMLNNAAVMVVAGSETTASALSGAMYLLCLSGKIEKATAEIRKSFASPEDIDLISVSHLPYLTAVIDETLRMYPAVPGQPPRVVPASGATVCGRFVPEETRVGVSHLATYFADYNFTHADKFIPERHLQKTEEPFKYDNYGAYQPWSVGLRNCIGRNLAYAEVRLTLAKLLWHFDFTLDVDKTGNFLDQKIWSIWAKRELYMFIKTRGTSSSSPQ.

The helical transmembrane segment at 3-23 threads the bilayer; that stretch reads FLSLPSLVIVIPVGYLLFHLG. N-linked (GlcNAc...) asparagine glycans are attached at residues Asn243 and Asn400. A heme-binding site is contributed by Cys438.

This sequence belongs to the cytochrome P450 family. Heme serves as cofactor.

The protein localises to the membrane. The catalysed reaction is versicolorin B + NADPH + O2 + H(+) = versicolorin A + NADP(+) + 2 H2O. It participates in mycotoxin biosynthesis; aflatoxin biosynthesis. In terms of biological role, versicolorin B desaturase; part of the gene cluster that mediates the biosynthesis of aflatoxins, a group of polyketide-derived furanocoumarins, and part of the most toxic and carcinogenic compounds among the known mycotoxins. The four major aflatoxins produced by A.parasiticus are aflatoxin B1 (AFB1), aflatoxin B2 (AFB2), aflatoxin G1 (AFG1) and aflatoxin G2 (AFG2). Within the aflatoxin pathway, the versicolorin B desaturase aflL catalyzes the conversion of versicolorin B (VERB) to versicolorin A (VERA). The biosynthesis of aflatoxins begins with the norsolorinic acid synthase aflC that combines a hexanoyl starter unit produced by the fatty acid synthase aflA/aflB and 7 malonyl-CoA extender units to synthesize the precursor NOR. The second step is the conversion of NOR to averantin and requires the norsolorinic acid ketoreductase aflD, which catalyzes the dehydration of norsolorinic acid to form (1'S)-averantin. The norsolorinic acid reductases aflE and aflF may also play a role in the conversion of NOR to AVN. The cytochrome P450 monooxygenase aflG then catalyzes the hydroxylation of AVN to 5'hydroxyaverantin (HAVN). The next step is performed by the 5'-hydroxyaverantin dehydrogenase aflH that transforms HAVN to 5'-oxoaverantin (OAVN) which is further converted to averufin (AVF) by aflK that plays a dual role in the pathway, as a 5'-oxoaverantin cyclase that mediates conversion of 5'-oxoaverantin, as well as a versicolorin B synthase in a later step in the pathway. The averufin oxidase aflI catalyzes the conversion of AVF to versiconal hemiacetal acetate (VHA). VHA is then the substrate for the versiconal hemiacetal acetate esterase aflJ to yield versiconal (VAL). Versicolorin B synthase aflK then converts VAL to versicolorin B (VERB) by closing the bisfuran ring of aflatoxin which is required for DNA-binding, thus giving to aflatoxin its activity as a mutagen. Then, the activity of the versicolorin B desaturase aflL leads to versicolorin A (VERA). A branch point starts from VERB since it can also be converted to dihydrodemethylsterigmatocystin (DMDHST), probably also by aflL, VERA being a precursor for aflatoxins B1 and G1, and DMDHST for aflatoxins B2 and G2. Next, the versicolorin reductase aflM and the cytochrome P450 monooxygenase aflN are involved in conversion of VERA to demethylsterigmatocystin (DMST). AflX and aflY seem also involved in this step, through probable aflX-mediated epoxide ring-opening step following versicolorin A oxidation and aflY-mediated Baeyer-Villiger oxidation required for the formation of the xanthone ring. The methyltransferase aflO then leads to the modification of DMST to sterigmatocystin (ST), and of DMDHST to dihydrosterigmatocystin (DHST). Both ST and DHST are then substrates of the O-methyltransferase aflP to yield O-methylsterigmatocystin (OMST) and dihydro-O-methylsterigmatocystin (DHOMST), respectively. Finally OMST is converted to aflatoxins B1 and G1, and DHOMST to aflatoxins B2 and G2, via the action of several enzymes including O-methylsterigmatocystin oxidoreductase aflQ, the cytochrome P450 monooxygenase aflU, but also the NADH-dependent flavin oxidoreductase nadA which is specifically required for the synthesis of AFG1. This chain is Versicolorin B desaturase, found in Aspergillus parasiticus (strain ATCC 56775 / NRRL 5862 / SRRC 143 / SU-1).